A 906-amino-acid polypeptide reads, in one-letter code: MCRIVGAPRTLLPLLAALLQASVEASGGIALCKTGFPEDVYSAVLSQDVHEGQPLLNVKFSNCNGKRKVQYESSEPADFKVDEDGMVYAVRSFPLSSEHAKFLIYAQDKETQEKWQVAVKLSLKPNLPEDSVKESQEIEEIVFPRQLMKHNGHLQRQKRDWVIPPINLPENSRGPFPQELVRIRSDRDKNLSLRYSVTGPGADQPPTGIFIINPISGQLSVTKPLDRELIARFHLRAHAVDINGNQVENPIDIVINVIDMNDNRPEFLHQVWNGTVPEGSKPGTYVMTVTAIDDDDPNTLNGMLRYRILSQAPSTPSPNMFTINNETGDIITVAAGLDREKVQQYMLIIQATDTEGSPTYGLSNTATAVITVTDVNDNPPEFTAMSFYGEVPENRVDVIVANLTVTDKDQPHTPAWNAVYRISGGDPTGRFAIQTDPNSNDGLVTVVKPIDFETNRMFVLTVAAENQVPLAKGIQHPPQSTATVSVTVIDVNENPYFAPNPKIIRQEEGLHAGTMLTTFTAQDPDRYMPQNIRYTKLSDPANWLKIDPVNGQITTIAVLDRESPNVKNNIYNATFLASDNGIPPMSGTGTLQIYLLDINDNAPQVVPQEAETCETPDPNSINITALDYDIDPNAGPFAFDLPLSPVTIKRNWTITRLNGDFAQLNLKIKFLEAGIYEVPIIITDSGNPPKSNISILRVKVCQCDSNGDCTDVDRIVGAGLGTGAIIAILLCIIILLILVLMFVVWMKRRDKERQAKQLLIDPEDDVRDNILKYDEEGGGEEDQDYDLSQLQQPDTVEPDAIKPVGIRRLDERPIHAEPQYPVRSAAPHPGDIGDFINEGLKAADNDPTAPPYDSLLVFDYEGSGSTAGSLSSLNSSSSGGEQDYDYLNDWGPRFKKLADMYGGGDD.

A signal peptide spans 1-25 (MCRIVGAPRTLLPLLAALLQASVEA). Positions 26–159 (SGGIALCKTG…HNGHLQRQKR (134 aa)) are excised as a propeptide. Ser-96 and Ser-135 each carry phosphoserine. Cadherin domains are found at residues 160-267 (DWVI…RPEF), 268-382 (LHQV…PPEF), 383-497 (TAMS…NPYF), 498-603 (APNP…DNAP), and 604-714 (QVVP…DVDR). Residues 160–724 (DWVIPPINLP…IVGAGLGTGA (565 aa)) are Extracellular-facing. Glu-170 contacts Ca(2+). An N-linked (GlcNAc...) asparagine glycan is attached at Asn-190. Residues Asp-226, Glu-228, Asp-259, Met-260, Asn-261, Asp-262, and Asn-263 each contribute to the Ca(2+) site. N-linked (GlcNAc...) asparagine glycosylation occurs at Asn-273. 3 residues coordinate Ca(2+): Asp-293, Asp-295, and Asn-301. N-linked (GlcNAc...) asparagine glycosylation occurs at Asn-325. Asp-353 is a Ca(2+) binding site. Residues Asn-402, Asn-572, Asn-622, Asn-651, and Asn-692 are each glycosylated (N-linked (GlcNAc...) asparagine). Residues 725-745 (IIAILLCIIILLILVLMFVVW) traverse the membrane as a helical segment. At 746–906 (MKRRDKERQA…LADMYGGGDD (161 aa)) the chain is on the cytoplasmic side. The span at 863-880 (SGSTAGSLSSLNSSSSGG) shows a compositional bias: low complexity. The disordered stretch occupies residues 863–884 (SGSTAGSLSSLNSSSSGGEQDY).

As to quaternary structure, homodimer (via extracellular region). Can also form heterodimers with other cadherins (via extracellular region). Dimerization occurs in trans, i.e. with a cadherin chain from another cell. Interacts with CDCP1. Interacts with PCDH8; this complex may also include TAOK2. The interaction with PCDH8 may lead to internalization through TAOK2/p38 MAPK pathway. Identified in a complex containing FGFR4, NCAM1, CDH2, PLCG1, FRS2, SRC, SHC1, GAP43 and CTTN. May interact with OBSCN (via protein kinase domain 2). Interacts with FBXO45. Post-translationally, cleaved by MMP24. Ectodomain cleavage leads to the generation of a soluble 90 kDa N-terminal soluble fragment and a 45 kDa membrane-bound C-terminal fragment 1 (CTF1), which is further cleaved by gamma-secretase into a 35 kDa. Cleavage in neural stem cells by MMP24 affects CDH2-mediated anchorage of neural stem cells to ependymocytes in the adult subependymal zone, leading to modulate neural stem cell quiescence. May be phosphorylated by OBSCN.

The protein localises to the cell membrane. It localises to the sarcolemma. It is found in the cell junction. Its subcellular location is the cell surface. The protein resides in the desmosome. The protein localises to the adherens junction. In terms of biological role, calcium-dependent cell adhesion protein; preferentially mediates homotypic cell-cell adhesion by dimerization with a CDH2 chain from another cell. Cadherins may thus contribute to the sorting of heterogeneous cell types. Acts as a regulator of neural stem cells quiescence by mediating anchorage of neural stem cells to ependymocytes in the adult subependymal zone: upon cleavage by MMP24, CDH2-mediated anchorage is affected, leading to modulate neural stem cell quiescence. Plays a role in cell-to-cell junction formation between pancreatic beta cells and neural crest stem (NCS) cells, promoting the formation of processes by NCS cells. CDH2 may be involved in neuronal recognition mechanism. In hippocampal neurons, may regulate dendritic spine density. In Rhinolophus ferrumequinum (Greater horseshoe bat), this protein is Cadherin-2 (CDH2).